A 278-amino-acid polypeptide reads, in one-letter code: Urease accessory protein UreD 1 (278 aa).

It belongs to the UreD family. In terms of assembly, ureD, UreF and UreG form a complex that acts as a GTP-hydrolysis-dependent molecular chaperone, activating the urease apoprotein by helping to assemble the nickel containing metallocenter of UreC. The UreE protein probably delivers the nickel.

The protein localises to the cytoplasm. Required for maturation of urease via the functional incorporation of the urease nickel metallocenter. This Bradyrhizobium sp. (strain ORS 278) protein is Urease accessory protein UreD 1.